Reading from the N-terminus, the 102-residue chain is Large ribosomal subunit protein bL21 (102 aa).

The protein belongs to the bacterial ribosomal protein bL21 family. Part of the 50S ribosomal subunit. Contacts protein L20.

In terms of biological role, this protein binds to 23S rRNA in the presence of protein L20. In Bacillus licheniformis (strain ATCC 14580 / DSM 13 / JCM 2505 / CCUG 7422 / NBRC 12200 / NCIMB 9375 / NCTC 10341 / NRRL NRS-1264 / Gibson 46), this protein is Large ribosomal subunit protein bL21.